The chain runs to 469 residues: Mitochondrial adenyl nucleotide antiporter SLC25A25 (469 aa).

Residues M1–D165 are regulatory N-terminal domain. Topologically, residues M1 to H189 are mitochondrial intermembrane. 3 EF-hand domains span residues T47–E80, D78–K113, and I114–E149. Ca(2+) contacts are provided by D60, D62, D64, Q66, and E71. Residues I151–H160 form a linker region region. Positions V166–R469 are C-terminal transmembrane transporter domain. Solcar repeat units lie at residues G184–L270, L278–T363, and P375–T463. A helical transmembrane segment spans residues L190–L207. Residues D208–R244 lie on the Mitochondrial matrix side of the membrane. A helical membrane pass occupies residues G245–Y264. Residues E265 to G287 lie on the Mitochondrial intermembrane side of the membrane. Residues S288–M301 form a helical membrane-spanning segment. The Mitochondrial matrix segment spans residues E302–K337. Residues G338 to Y357 form a helical membrane-spanning segment. Residues E358–L380 lie on the Mitochondrial intermembrane side of the membrane. The helical transmembrane segment at L381–L398 threads the bilayer. At A399 to R437 the chain is on the mitochondrial matrix side. A helical transmembrane segment spans residues G438–Y457. Residues E458–R469 lie on the Mitochondrial intermembrane side of the membrane.

Belongs to the mitochondrial carrier (TC 2.A.29) family. In terms of tissue distribution, mainly present in the liver and the skeletal muscle (at protein level).

Its subcellular location is the mitochondrion inner membrane. It carries out the reaction Mg(2+)(out) + phosphate(in) + ATP(out) = Mg(2+)(in) + phosphate(out) + ATP(in). Its activity is regulated as follows. Activated by an increase in cytosolic calcium levels that induce a conformational change of the N-terminal regulatory domain, uncapping the channel and allowing transport. Its function is as follows. Electroneutral antiporter that most probably mediates the transport of adenyl nucleotides through the inner mitochondrial membrane. Originally identified as an ATP-magnesium/inorganic phosphate antiporter, it could have a broader specificity for adenyl nucleotides. By regulating the mitochondrial matrix adenyl nucleotide pool could adapt to changing cellular energetic demands and indirectly regulate adenyl nucleotide-dependent metabolic pathways. The polypeptide is Mitochondrial adenyl nucleotide antiporter SLC25A25 (Rattus norvegicus (Rat)).